The primary structure comprises 299 residues: 33 kDa chaperonin (299 aa).

2 cysteine pairs are disulfide-bonded: cysteine 240-cysteine 242 and cysteine 273-cysteine 276.

This sequence belongs to the HSP33 family. Under oxidizing conditions two disulfide bonds are formed involving the reactive cysteines. Under reducing conditions zinc is bound to the reactive cysteines and the protein is inactive.

It is found in the cytoplasm. Redox regulated molecular chaperone. Protects both thermally unfolding and oxidatively damaged proteins from irreversible aggregation. Plays an important role in the bacterial defense system toward oxidative stress. This Thermosynechococcus vestitus (strain NIES-2133 / IAM M-273 / BP-1) protein is 33 kDa chaperonin.